The following is a 173-amino-acid chain: Peptide deformylase (173 aa).

The Fe cation site is built by Cys-91 and His-133. Glu-134 is a catalytic residue. Residue His-137 participates in Fe cation binding.

This sequence belongs to the polypeptide deformylase family. Fe(2+) serves as cofactor.

It carries out the reaction N-terminal N-formyl-L-methionyl-[peptide] + H2O = N-terminal L-methionyl-[peptide] + formate. In terms of biological role, removes the formyl group from the N-terminal Met of newly synthesized proteins. Requires at least a dipeptide for an efficient rate of reaction. N-terminal L-methionine is a prerequisite for activity but the enzyme has broad specificity at other positions. In Buchnera aphidicola subsp. Acyrthosiphon pisum (strain 5A), this protein is Peptide deformylase.